A 423-amino-acid chain; its full sequence is Serine hydroxymethyltransferase (423 aa).

(6S)-5,6,7,8-tetrahydrofolate contacts are provided by residues leucine 120 and 124–126; that span reads GHL. Lysine 229 carries the N6-(pyridoxal phosphate)lysine modification. 353-355 lines the (6S)-5,6,7,8-tetrahydrofolate pocket; that stretch reads SPF.

It belongs to the SHMT family. As to quaternary structure, homodimer. Pyridoxal 5'-phosphate is required as a cofactor.

It is found in the cytoplasm. The enzyme catalyses (6R)-5,10-methylene-5,6,7,8-tetrahydrofolate + glycine + H2O = (6S)-5,6,7,8-tetrahydrofolate + L-serine. It functions in the pathway one-carbon metabolism; tetrahydrofolate interconversion. Its pathway is amino-acid biosynthesis; glycine biosynthesis; glycine from L-serine: step 1/1. In terms of biological role, catalyzes the reversible interconversion of serine and glycine with tetrahydrofolate (THF) serving as the one-carbon carrier. This reaction serves as the major source of one-carbon groups required for the biosynthesis of purines, thymidylate, methionine, and other important biomolecules. Also exhibits THF-independent aldolase activity toward beta-hydroxyamino acids, producing glycine and aldehydes, via a retro-aldol mechanism. This is Serine hydroxymethyltransferase from Prochlorococcus marinus (strain AS9601).